A 139-amino-acid chain; its full sequence is Translation initiation factor 2 subunit beta (139 aa).

It belongs to the eIF-2-beta/eIF-5 family. In terms of assembly, heterotrimer composed of an alpha, a beta and a gamma chain.

Its function is as follows. eIF-2 functions in the early steps of protein synthesis by forming a ternary complex with GTP and initiator tRNA. This is Translation initiation factor 2 subunit beta from Saccharolobus solfataricus (strain ATCC 35092 / DSM 1617 / JCM 11322 / P2) (Sulfolobus solfataricus).